A 548-amino-acid chain; its full sequence is CTP synthase (548 aa).

The segment at 1–270 (MNRRSCAFIF…DTKISALLGC (270 aa)) is amidoligase domain. S17 lines the CTP pocket. S17 is a binding site for UTP. ATP-binding positions include 18–23 (SIGKGL) and D75. D75 and E143 together coordinate Mg(2+). CTP contacts are provided by residues 150–152 (DIE), 190–195 (KTKPSQ), and K227. UTP-binding positions include 190–195 (KTKPSQ) and K227. A Glutamine amidotransferase type-1 domain is found at 305 to 548 (YSGLCDAYIS…VRAGLLRKYS (244 aa)). Residue G356 coordinates L-glutamine. C383 functions as the Nucleophile; for glutamine hydrolysis in the catalytic mechanism. Residues 384 to 387 (FGFQ), E407, and R475 contribute to the L-glutamine site. Active-site residues include H521 and E523.

Belongs to the CTP synthase family. As to quaternary structure, homotetramer.

It catalyses the reaction UTP + L-glutamine + ATP + H2O = CTP + L-glutamate + ADP + phosphate + 2 H(+). The catalysed reaction is L-glutamine + H2O = L-glutamate + NH4(+). It carries out the reaction UTP + NH4(+) + ATP = CTP + ADP + phosphate + 2 H(+). The protein operates within pyrimidine metabolism; CTP biosynthesis via de novo pathway; CTP from UDP: step 2/2. Its activity is regulated as follows. Allosterically activated by GTP, when glutamine is the substrate; GTP has no effect on the reaction when ammonia is the substrate. The allosteric effector GTP functions by stabilizing the protein conformation that binds the tetrahedral intermediate(s) formed during glutamine hydrolysis. Inhibited by the product CTP, via allosteric rather than competitive inhibition. Functionally, catalyzes the ATP-dependent amination of UTP to CTP with either L-glutamine or ammonia as the source of nitrogen. Regulates intracellular CTP levels through interactions with the four ribonucleotide triphosphates. The polypeptide is CTP synthase (Neorickettsia sennetsu (strain ATCC VR-367 / Miyayama) (Ehrlichia sennetsu)).